A 244-amino-acid polypeptide reads, in one-letter code: tRNA (guanine-N(1)-)-methyltransferase (244 aa).

S-adenosyl-L-methionine-binding positions include Gly-112 and 132–137 (IGDYIL).

The protein belongs to the RNA methyltransferase TrmD family. As to quaternary structure, homodimer.

Its subcellular location is the cytoplasm. The catalysed reaction is guanosine(37) in tRNA + S-adenosyl-L-methionine = N(1)-methylguanosine(37) in tRNA + S-adenosyl-L-homocysteine + H(+). In terms of biological role, specifically methylates guanosine-37 in various tRNAs. The sequence is that of tRNA (guanine-N(1)-)-methyltransferase from Geobacillus kaustophilus (strain HTA426).